Consider the following 175-residue polypeptide: RNA pyrophosphohydrolase (175 aa).

In terms of domain architecture, Nudix hydrolase spans 6-149 (GYRPNVGIVI…KRDVYRRVMK (144 aa)). Positions 38–59 (GGINPGETPEQAMYRELFEEVG) match the Nudix box motif.

It belongs to the Nudix hydrolase family. RppH subfamily. The cofactor is a divalent metal cation.

Its function is as follows. Accelerates the degradation of transcripts by removing pyrophosphate from the 5'-end of triphosphorylated RNA, leading to a more labile monophosphorylated state that can stimulate subsequent ribonuclease cleavage. The chain is RNA pyrophosphohydrolase from Yersinia pseudotuberculosis serotype O:1b (strain IP 31758).